Here is a 232-residue protein sequence, read N- to C-terminus: Large ribosomal subunit protein uL1 (232 aa).

The protein belongs to the universal ribosomal protein uL1 family. In terms of assembly, part of the 50S ribosomal subunit.

Binds directly to 23S rRNA. The L1 stalk is quite mobile in the ribosome, and is involved in E site tRNA release. Functionally, protein L1 is also a translational repressor protein, it controls the translation of the L11 operon by binding to its mRNA. The sequence is that of Large ribosomal subunit protein uL1 from Bordetella bronchiseptica (strain ATCC BAA-588 / NCTC 13252 / RB50) (Alcaligenes bronchisepticus).